The following is a 586-amino-acid chain: MPKPINVRVTTMDAELEFAIQPNTTGKQLFDQVVKTIGLREVWYFGLHYVDNKGFPTWLKLDKKVSAQEVRKENPLQFKFRAKFYPEDVAEELIQDITQKLFFLQVKEGILSDEIYCPPETAVLLGSYAVQAKFGDYNKEVHKSGYLSSERLIPQRVMDQHKLTRDQWEDRIQVWHAEHRGMLKDNAMLEYLKIAQDLEMYGINYFEIKNKKGTDLWLGVDALGLNIYEKDDKLTPKIGFPWSEIRNISFNDKKFVIKPIDKKAPDFVFYAPRLRINKRILQLCMGNHELYMRRRKPDTIEVQQMKAQAREEKHQKQLERQQLETEKKRRETVEREKEQMMREKEELMLRLQDYEEKTKKAERELSEQIQRALQLEEERKRAQEEAERLEADRMAALRAKEELERQAVDQIKSQEQLAAELAEYTAKIALLEEARRRKEDEVEEWQHRAKEAQDDLVKTKEELHLVMTAPPPPPPPVYEPVSYHVQESLQDEGAEPTGYSAELSSEGIRDDRNEEKRITEAEKNERVQRQLLTLSSELSQARDENKRTHNDIIHNENMRQGRDKYKTLRQIRQGNTKQRIDEFEAL.

The FERM domain maps to 2–296; sequence PKPINVRVTT…NHELYMRRRK (295 aa). K60 bears the N6-acetyllysine mark. Positions 115 to 120 match the [IL]-x-C-x-x-[DE] motif motif; that stretch reads IYCPPE. Phosphotyrosine; by PDGFR is present on Y146. Positions 244–586 are interaction with SCYL3; that stretch reads EIRNISFNDK…KQRIDEFEAL (343 aa). Positions 302 to 462 form a coiled coil; that stretch reads VQQMKAQARE…QDDLVKTKEE (161 aa). A disordered region spans residues 306–341; that stretch reads KAQAREEKHQKQLERQQLETEKKRRETVEREKEQMM. Residues 308 to 341 are compositionally biased toward basic and acidic residues; that stretch reads QAREEKHQKQLERQQLETEKKRRETVEREKEQMM. The residue at position 354 (Y354) is a Phosphotyrosine; by PDGFR. Position 366 is a phosphoserine (S366). Y478 is modified (phosphotyrosine). The tract at residues 485-564 is disordered; that stretch reads VQESLQDEGA…NENMRQGRDK (80 aa). Basic and acidic residues predominate over residues 507–528; the sequence is GIRDDRNEEKRITEAEKNERVQ. A compositionally biased stretch (polar residues) spans 530–539; sequence QLLTLSSELS. S535 is modified (phosphoserine). Positions 540-564 are enriched in basic and acidic residues; the sequence is QARDENKRTHNDIIHNENMRQGRDK. Position 567 is a phosphothreonine; by ROCK2 and PKC/PRKCI (T567).

As to quaternary structure, monomer. Homodimer. Interacts with PALS1 and NHERF2. Found in a complex with EZR, PODXL and NHERF2. Interacts with MCC, PLEKHG6, PODXL, SCYL3/PACE1, NHERF1 and TMEM8B. Interacts (when phosphorylated) with FES/FPS. Interacts with dimeric S100P, the interaction may be activating through unmasking of F-actin binding sites. Identified in complexes that contain VIM, EZR, AHNAK, BFSP1, BFSP2, ANK2, PLEC, PRX and spectrin. Detected in a complex composed of at least EZR, AHNAK, PPL and PRX. Interacts with PDPN (via cytoplasmic domain); activates RHOA and promotes epithelial-mesenchymal transition. Interacts with SPN/CD43 cytoplasmic tail, CD44 and ICAM2. Interacts with SLC9A3; interaction targets SLC9A3 to the apical membrane. Interacts with SLC9A1; regulates interactions of SLC9A1 with cytoskeletal and promotes stress fiber formation. Interacts with CLIC5; may work together in a complex which also includes RDX and MYO6 to stabilize linkages between the plasma membrane and subjacent actin cytoskeleton at the base of stereocilia. Post-translationally, phosphorylated by tyrosine-protein kinases. Phosphorylation by ROCK2 suppresses the head-to-tail association of the N-terminal and C-terminal halves resulting in an opened conformation which is capable of actin and membrane-binding. In terms of processing, S-nitrosylation is induced by interferon-gamma and oxidatively-modified low-densitity lipoprotein (LDL(ox)) possibly implicating the iNOS-S100A8/9 transnitrosylase complex. As to expression, expressed in cerebral cortex, basal ganglia, hippocampus, hypophysis, and optic nerve. Weakly expressed in brain stem and diencephalon. Stronger expression was detected in gray matter of frontal lobe compared to white matter (at protein level). Component of the microvilli of intestinal epithelial cells. Preferentially expressed in astrocytes of hippocampus, frontal cortex, thalamus, parahippocampal cortex, amygdala, insula, and corpus callosum. Not detected in neurons in most tissues studied.

Its subcellular location is the apical cell membrane. It is found in the cell projection. It localises to the microvillus membrane. The protein resides in the ruffle membrane. The protein localises to the cytoplasm. Its subcellular location is the cell cortex. It is found in the cytoskeleton. It localises to the microvillus. A head-to-tail association, of the N-terminal and C-terminal halves results in a closed conformation (inactive form) which is incapable of actin or membrane-binding. In terms of biological role, probably involved in connections of major cytoskeletal structures to the plasma membrane. In epithelial cells, required for the formation of microvilli and membrane ruffles on the apical pole. Along with PLEKHG6, required for normal macropinocytosis. In Homo sapiens (Human), this protein is Ezrin (EZR).